A 199-amino-acid chain; its full sequence is uncharacterized protein (199 aa).

Residues 17 to 37 (AGAVTLGIGFFALASALWFLI) form a helical membrane-spanning segment.

Its subcellular location is the membrane. This is an uncharacterized protein from Homo sapiens (Human).